The sequence spans 153 residues: Large ribosomal subunit protein uL30 (153 aa).

This sequence belongs to the universal ribosomal protein uL30 family. As to quaternary structure, part of the 50S ribosomal subunit.

This chain is Large ribosomal subunit protein uL30, found in Methanosarcina acetivorans (strain ATCC 35395 / DSM 2834 / JCM 12185 / C2A).